The primary structure comprises 477 residues: Bifunctional protein HldE (477 aa).

The segment at 1-318 is ribokinase; it reads MKVNLPAFER…ENAVRGRADT (318 aa). 195-198 contributes to the ATP binding site; it reads NLSE. Asp-264 is an active-site residue. The tract at residues 344 to 477 is cytidylyltransferase; that stretch reads MTNGVFDILH…IKKIQTESEK (134 aa).

In the N-terminal section; belongs to the carbohydrate kinase PfkB family. It in the C-terminal section; belongs to the cytidylyltransferase family. Homodimer.

It carries out the reaction D-glycero-beta-D-manno-heptose 7-phosphate + ATP = D-glycero-beta-D-manno-heptose 1,7-bisphosphate + ADP + H(+). The enzyme catalyses D-glycero-beta-D-manno-heptose 1-phosphate + ATP + H(+) = ADP-D-glycero-beta-D-manno-heptose + diphosphate. It functions in the pathway nucleotide-sugar biosynthesis; ADP-L-glycero-beta-D-manno-heptose biosynthesis; ADP-L-glycero-beta-D-manno-heptose from D-glycero-beta-D-manno-heptose 7-phosphate: step 1/4. Its pathway is nucleotide-sugar biosynthesis; ADP-L-glycero-beta-D-manno-heptose biosynthesis; ADP-L-glycero-beta-D-manno-heptose from D-glycero-beta-D-manno-heptose 7-phosphate: step 3/4. Its function is as follows. Catalyzes the phosphorylation of D-glycero-D-manno-heptose 7-phosphate at the C-1 position to selectively form D-glycero-beta-D-manno-heptose-1,7-bisphosphate. Functionally, catalyzes the ADP transfer from ATP to D-glycero-beta-D-manno-heptose 1-phosphate, yielding ADP-D-glycero-beta-D-manno-heptose. The chain is Bifunctional protein HldE from Salmonella agona (strain SL483).